The primary structure comprises 231 residues: Large ribosomal subunit protein uL1 (231 aa).

It belongs to the universal ribosomal protein uL1 family. As to quaternary structure, part of the 50S ribosomal subunit.

Binds directly to 23S rRNA. The L1 stalk is quite mobile in the ribosome, and is involved in E site tRNA release. In terms of biological role, protein L1 is also a translational repressor protein, it controls the translation of the L11 operon by binding to its mRNA. This chain is Large ribosomal subunit protein uL1, found in Ectopseudomonas mendocina (strain ymp) (Pseudomonas mendocina).